Reading from the N-terminus, the 57-residue chain is uncharacterized protein (57 aa).

The chain crosses the membrane as a helical span at residues 34–54 (AALLDAAALVVIPGLLTVAAV).

The protein resides in the membrane. This is an uncharacterized protein from Dictyostelium discoideum (Social amoeba).